The following is a 793-amino-acid chain: Phenylalanine--tRNA ligase beta subunit (793 aa).

Residues 39–148 form the tRNA-binding domain; sequence AGQFTHVIVA…DEAPIGMDLR (110 aa). A B5 domain is found at 401–477; sequence PGTVSFLFDT…RLYGYDKLQA (77 aa). Mg(2+) is bound by residues Asp-455, Asp-461, Glu-464, and Glu-465. The 95-residue stretch at 698 to 792 folds into the FDX-ACB domain; the sequence is SKYPQIRRDL…LENEFSILLR (95 aa).

It belongs to the phenylalanyl-tRNA synthetase beta subunit family. Type 1 subfamily. In terms of assembly, tetramer of two alpha and two beta subunits. Mg(2+) serves as cofactor.

It localises to the cytoplasm. It catalyses the reaction tRNA(Phe) + L-phenylalanine + ATP = L-phenylalanyl-tRNA(Phe) + AMP + diphosphate + H(+). This is Phenylalanine--tRNA ligase beta subunit from Legionella pneumophila (strain Lens).